The sequence spans 1260 residues: Ankyrin repeat and sterile alpha motif domain-containing protein 1B (1260 aa).

ANK repeat units lie at residues 2-31, 58-87, 91-120, 127-156, 160-189, 193-222, and 225-254; these read GKDQ…GGIL, SGYT…STNV, KGYF…SHSR, ENET…DPTI, KLET…NLMS, RKHT…DVSC, and EKGS…DANI. Residues 298–326 form a disordered region; the sequence is HAQEDTAQETRLSSPAQSPSQKTKSETVT. The segment covering 306-326 has biased composition (polar residues); it reads ETRLSSPAQSPSQKTKSETVT. A phosphoserine mark is found at S310, S311, S315, S354, and S365. 3 disordered regions span residues 368–402, 491–513, and 556–642; these read ELGK…SCGP, PGTG…PSPD, and GCTS…EASL. Residues 372–385 are compositionally biased toward polar residues; it reads NGSQSVRTSSTINL. T504 is modified (phosphothreonine). A phosphoserine mark is found at S508 and S511. Over residues 556-575 the composition is skewed to low complexity; that stretch reads GCTSFTSSPPVSPPTSSVET. The span at 576–588 shows a compositional bias: basic and acidic residues; sequence TEIKNEGAEHTDD. S739 is modified (phosphoserine). The interval 754-778 is disordered; the sequence is VNWSKSSTAERSSKDNSERTPSFTS. T773 carries the post-translational modification Phosphothreonine. Phosphoserine is present on S775. 2 SAM domains span residues 810-876 and 884-949; these read CPVQ…LPKM and YHPT…RLHE. At Y901 the chain carries Phosphotyrosine. A Nuclear localization signal motif is present at residues 935–938; that stretch reads HRKR. The segment at 946-989 is disordered; sequence RLHEDPPQKPPRSITLREPSGNHTPPQLSPSLSQSTYTTGGSLD. The span at 969 to 984 shows a compositional bias: low complexity; it reads TPPQLSPSLSQSTYTT. Residue S974 is modified to Phosphoserine. Y1007 carries the post-translational modification Phosphotyrosine. A PID domain is found at 1056–1213; sequence IFQSCDYKAF…SFENKPSKPI (158 aa). The tract at residues 1197-1217 is disordered; that stretch reads HSSTLPESFENKPSKPIPKPR.

As to quaternary structure, interacts with EPHA8. Isoform 2 interacts with COIL. Isoform 3 interacts with DLG4. In terms of processing, nuclear translocation of isoform 3 requires an NMDAR-dependent proteolytic cleavage. A 35 kDa N-terminal form shuttles to the nucleus. As to expression, isoform 3 is brain specific and highly enriched in the postsynaptic densities (PSDs), especially in cortical, striatal and hippocampal PSDs.

It is found in the cytoplasm. The protein localises to the nucleus. It localises to the postsynaptic density. The protein resides in the cell projection. Its subcellular location is the dendritic spine. It is found in the cajal body. In terms of biological role, isoform 2 may participate in the regulation of nucleoplasmic coilin protein interactions in neuronal and transformed cells. Functionally, isoform 3 can regulate global protein synthesis by altering nucleolar numbers. This is Ankyrin repeat and sterile alpha motif domain-containing protein 1B (Anks1b) from Rattus norvegicus (Rat).